The primary structure comprises 621 residues: Rab proteins geranylgeranyltransferase component A 2 (621 aa).

A disordered region spans residues 113 to 171 (VQDTETLQRSSPLEASATPADSLDSASLPKERQSAYSTSYEVPSRHTEESDRELSLPSA). Over residues 115–125 (DTETLQRSSPL) the composition is skewed to polar residues. Residues 155-166 (PSRHTEESDREL) are compositionally biased toward basic and acidic residues.

The protein belongs to the Rab GDI family. Monomer. Heterotrimer composed of RABGGTA, RABGGTB and CHML; within this trimer, RABGGTA and RABGGTB form the catalytic component B, while CHML (component A) mediates Rab protein binding. Interacts with RAB1A, RAB7A and RAB27A, but has much lower affinity for RAB1A, RAB7A and RAB27A than CHM. Interacts with the non-phosphorylated forms of RAB3A, RAB3B, RAB3C, RAB3D, RAB5B, RAB5C, RAB8A, RAB8B, RAB10, RAB12, RAB35, and RAB43.

The protein localises to the cytoplasm. The protein resides in the cytosol. In terms of biological role, substrate-binding subunit (component A) of the Rab geranylgeranyltransferase (GGTase) complex. Binds unprenylated Rab proteins and presents the substrate peptide to the catalytic component B. The component A is thought to be regenerated by transferring its prenylated Rab back to the donor membrane. Less effective than CHM in supporting prenylation of Rab3 family. In Mus musculus (Mouse), this protein is Rab proteins geranylgeranyltransferase component A 2 (Chml).